The sequence spans 1399 residues: DNA-directed RNA polymerase subunit beta' (1399 aa).

Positions 71, 73, 86, and 89 each coordinate Zn(2+). Mg(2+)-binding residues include Asp462, Asp464, and Asp466. Residues Cys810, Cys884, Cys891, and Cys894 each contribute to the Zn(2+) site.

Belongs to the RNA polymerase beta' chain family. As to quaternary structure, the RNAP catalytic core consists of 2 alpha, 1 beta, 1 beta' and 1 omega subunit. When a sigma factor is associated with the core the holoenzyme is formed, which can initiate transcription. Mg(2+) is required as a cofactor. The cofactor is Zn(2+).

It carries out the reaction RNA(n) + a ribonucleoside 5'-triphosphate = RNA(n+1) + diphosphate. Its function is as follows. DNA-dependent RNA polymerase catalyzes the transcription of DNA into RNA using the four ribonucleoside triphosphates as substrates. The sequence is that of DNA-directed RNA polymerase subunit beta' from Nitrobacter winogradskyi (strain ATCC 25391 / DSM 10237 / CIP 104748 / NCIMB 11846 / Nb-255).